Here is a 353-residue protein sequence, read N- to C-terminus: Photosystem II protein D1 (353 aa).

The residue at position 2 (Thr2) is an N-acetylthreonine. Thr2 is modified (phosphothreonine). A run of 3 helical transmembrane segments spans residues 29 to 46, 118 to 133, and 142 to 156; these read YIGW…TATS, HFLL…EWEL, and WIAV…AATA. His118 is a chlorophyll a binding site. Residue Tyr126 participates in pheophytin a binding. [CaMn4O5] cluster contacts are provided by Asp170 and Glu189. The chain crosses the membrane as a helical span at residues 197-218; sequence FHMLGVAGVFGGSLFSAMHGSL. His198 contacts chlorophyll a. A quinone-binding positions include His215 and 264–265; that span reads SF. Residue His215 coordinates Fe cation. His272 is a Fe cation binding site. The chain crosses the membrane as a helical span at residues 274–288; it reads FLAAWPVVGIWFTAL. [CaMn4O5] cluster-binding residues include His332, Glu333, Asp342, and Ala344. Positions 345-353 are excised as a propeptide; the sequence is ALEVPSLNG.

It belongs to the reaction center PufL/M/PsbA/D family. PSII is composed of 1 copy each of membrane proteins PsbA, PsbB, PsbC, PsbD, PsbE, PsbF, PsbH, PsbI, PsbJ, PsbK, PsbL, PsbM, PsbT, PsbX, PsbY, PsbZ, Psb30/Ycf12, at least 3 peripheral proteins of the oxygen-evolving complex and a large number of cofactors. It forms dimeric complexes. The D1/D2 heterodimer binds P680, chlorophylls that are the primary electron donor of PSII, and subsequent electron acceptors. It shares a non-heme iron and each subunit binds pheophytin, quinone, additional chlorophylls, carotenoids and lipids. D1 provides most of the ligands for the Mn4-Ca-O5 cluster of the oxygen-evolving complex (OEC). There is also a Cl(-1) ion associated with D1 and D2, which is required for oxygen evolution. The PSII complex binds additional chlorophylls, carotenoids and specific lipids. serves as cofactor. Tyr-161 forms a radical intermediate that is referred to as redox-active TyrZ, YZ or Y-Z. Post-translationally, C-terminally processed by CTPA; processing is essential to allow assembly of the oxygen-evolving complex and thus photosynthetic growth.

The protein resides in the plastid. It is found in the chloroplast thylakoid membrane. The enzyme catalyses 2 a plastoquinone + 4 hnu + 2 H2O = 2 a plastoquinol + O2. Functionally, photosystem II (PSII) is a light-driven water:plastoquinone oxidoreductase that uses light energy to abstract electrons from H(2)O, generating O(2) and a proton gradient subsequently used for ATP formation. It consists of a core antenna complex that captures photons, and an electron transfer chain that converts photonic excitation into a charge separation. The D1/D2 (PsbA/PsbD) reaction center heterodimer binds P680, the primary electron donor of PSII as well as several subsequent electron acceptors. The sequence is that of Photosystem II protein D1 from Lolium perenne (Perennial ryegrass).